A 186-amino-acid polypeptide reads, in one-letter code: Acetyltransferase PA2578 (186 aa).

The N-acetyltransferase domain maps to 12–176; that stretch reads LQLVPFQLGH…NVVLMGLLRQ (165 aa). CoA-binding positions include glutamine 37, 97–99, glycine 105, asparagine 137, and 142–144; these read IVL and HLY.

In terms of assembly, homodimer.

Its function is as follows. Catalyzes the transfer of an acetyl group from acetyl coenzyme A (AcCoA) to an acceptor substrate and releases both CoA and the acetylated product. It prefers the antibiotic chloramphenicol. This Pseudomonas aeruginosa (strain ATCC 15692 / DSM 22644 / CIP 104116 / JCM 14847 / LMG 12228 / 1C / PRS 101 / PAO1) protein is Acetyltransferase PA2578.